The primary structure comprises 347 residues: Protein POOR HOMOLOGOUS SYNAPSIS 1 (347 aa).

It is found in the cytoplasm. Functionally, required for accurate chromosome segregation in meiosis. Required for pairing to occur between homologous chromosomes. Acts in early recombination steps and ensures pairing fidelity and proper repair of meiotic DNA double-strand-breaks. Regulates recombination and pairing of homologous chromosomes during meiotic prophase by controlling transport of RAD50 from cytoplasm to the nucleus. May affect pairing of the gene-rich fraction of the genome rather than preventing pairing between repetitive DNA elements. In Zea mays (Maize), this protein is Protein POOR HOMOLOGOUS SYNAPSIS 1.